We begin with the raw amino-acid sequence, 354 residues long: Uroporphyrinogen decarboxylase (354 aa).

Residues 27-31, aspartate 77, tyrosine 154, threonine 209, and histidine 327 contribute to the substrate site; that span reads RQAGR.

It belongs to the uroporphyrinogen decarboxylase family. As to quaternary structure, homodimer.

The protein resides in the cytoplasm. The catalysed reaction is uroporphyrinogen III + 4 H(+) = coproporphyrinogen III + 4 CO2. It participates in porphyrin-containing compound metabolism; protoporphyrin-IX biosynthesis; coproporphyrinogen-III from 5-aminolevulinate: step 4/4. In terms of biological role, catalyzes the decarboxylation of four acetate groups of uroporphyrinogen-III to yield coproporphyrinogen-III. This Actinobacillus succinogenes (strain ATCC 55618 / DSM 22257 / CCUG 43843 / 130Z) protein is Uroporphyrinogen decarboxylase.